The chain runs to 780 residues: Catenin beta-1 (780 aa).

Residues 34–56 (GIHSGATTTAPSLSGKGNPEDDD) form a disordered region. ARM repeat units lie at residues 140–179 (NYQD…QLSK), 224–263 (REGL…NLLL), 266–305 (EGAK…ILAY), 350–389 (SSNK…NLSD), 399–430 (GLLG…TCNN), 431–472 (YKNK…HLTS), 478–518 (EMAQ…NLAL), 520–561 (PANH…QFVE), 583–622 (IHNR…ELAQ), and 624–663 (KEAA…RMSE). The segment covering 735–744 (EHEMAGHHPG) has biased composition (basic and acidic residues). Positions 735–770 (EHEMAGHHPGPDYPVDGLPDLGHTQDLIDGLPPGDS) are disordered.

Belongs to the beta-catenin family. In terms of assembly, interacts with adnpa. Interacts with cdh1 during oogenesis and in the unfertilized egg. Interacts with ctnna1 and cdh2. In terms of processing, phosphorylation by gsk3b promotes ubiquitination and subsequent degradation by the proteasome. Ubiquitinated when phosphorylated by gsk3b, leading to its degradation. As to expression, expressed in the successional lamina, also expressed in both the epithelial and mesenchymal cells of the developing replacement tooth (at protein level). Expressed in the enamel organ as well as in the inner and outer dental epithelium during replacement tooth morphogenesis (at protein level). Expressed in the differentiated, polarized odontoblasts that line the dentine matrix as well as in the inner and outer dental epithelium during tooth cytodifferentiation (at protein level). Expressed in the reduced enamel organ, odontoblasts and weakly at the center of the dental papilla of the functional tooth as well as in the epithelial crypts surrounding the functional tooth (at protein level). Expressed in the liver (at protein level). Expressed at intercalated disks in the heart (at protein level). Expressed in the ovary.

It localises to the cytoplasm. It is found in the nucleus. The protein localises to the cell membrane. The protein resides in the cell junction. Its subcellular location is the adherens junction. Functionally, key downstream component of the canonical Wnt signaling pathway. In the absence of Wnt, forms a complex with axin1, axin2, apc, csnk1a1 and gsk3b that promotes phosphorylation on N-terminal Ser and Thr residues and ubiquitination of ctnnb1 and its subsequent degradation by the proteasome. In the presence of Wnt ligand, ctnnb1 is not ubiquitinated and accumulates in the nucleus, where it acts as a coactivator for transcription factors of the TCF/LEF family, leading to activate Wnt responsive genes. Plays a key role in dorsoventral patterning: in prospective ventral blastomeres, its down-regulation by axin1 and axin2 leads to inhibit the Wnt signaling pathway, while in prospective dorsal blastomeres, degradation of axin results in stabilization and nuclear translocation of ctnnb1. The polypeptide is Catenin beta-1 (Danio rerio (Zebrafish)).